The chain runs to 345 residues: MIERVLAIETSCDDTSVAIVDRTGWVHSVVAASQDLDHEIYGGIVPEIAARNHSIALIPLIEEAFKKANMNWSDVQGIAVTNRPGLIGALIVGLVTAKSLSQAKHLPFLGVNHLEGHLLAPFLRDDKYAPPEDFGYPYVGLAISGGHTSLYQIKGLGDYRILGATKDDAAGECFDKFAKMAGLGFPGGVRVDQMAKAGNPQAFEFPRSMIHDDTFDMSFSGLKSSGQRMLEQLGPELVQERLPDLCASFQEAIVDVLIAKLDRAAKVFRSKRVILTGGVSANSRLRQRAQEWADKKGYTLVIPPLRYCTDNAAMIGYVGALRMARGEVSALDLGPSPQALASDFK.

Fe cation contacts are provided by His113 and His117. Substrate is bound by residues 142-146 (AISGG), Asp175, Gly188, Asp192, and Asn282. Residue Asp310 participates in Fe cation binding.

The protein belongs to the KAE1 / TsaD family. Requires Fe(2+) as cofactor.

It is found in the cytoplasm. It carries out the reaction L-threonylcarbamoyladenylate + adenosine(37) in tRNA = N(6)-L-threonylcarbamoyladenosine(37) in tRNA + AMP + H(+). Required for the formation of a threonylcarbamoyl group on adenosine at position 37 (t(6)A37) in tRNAs that read codons beginning with adenine. Is involved in the transfer of the threonylcarbamoyl moiety of threonylcarbamoyl-AMP (TC-AMP) to the N6 group of A37, together with TsaE and TsaB. TsaD likely plays a direct catalytic role in this reaction. The chain is tRNA N6-adenosine threonylcarbamoyltransferase from Bdellovibrio bacteriovorus (strain ATCC 15356 / DSM 50701 / NCIMB 9529 / HD100).